The primary structure comprises 334 residues: Glyceraldehyde-3-phosphate dehydrogenase (334 aa).

NAD(+)-binding positions include 12–13 (TI) and G111. D-glyceraldehyde 3-phosphate is bound at residue 140–142 (SCN). C141 serves as the catalytic Nucleophile. R167 contributes to the NAD(+) binding site. D-glyceraldehyde 3-phosphate is bound at residue 192–193 (HG). Q298 provides a ligand contact to NAD(+).

It belongs to the glyceraldehyde-3-phosphate dehydrogenase family. In terms of assembly, homotetramer.

Its subcellular location is the cytoplasm. The catalysed reaction is D-glyceraldehyde 3-phosphate + phosphate + NADP(+) = (2R)-3-phospho-glyceroyl phosphate + NADPH + H(+). It catalyses the reaction D-glyceraldehyde 3-phosphate + phosphate + NAD(+) = (2R)-3-phospho-glyceroyl phosphate + NADH + H(+). The protein operates within carbohydrate degradation; glycolysis; pyruvate from D-glyceraldehyde 3-phosphate: step 1/5. The sequence is that of Glyceraldehyde-3-phosphate dehydrogenase from Thermococcus kodakarensis (strain ATCC BAA-918 / JCM 12380 / KOD1) (Pyrococcus kodakaraensis (strain KOD1)).